The following is a 622-amino-acid chain: E3 ubiquitin-protein ligase hrd-1 (622 aa).

Residues 1–23 form the signal peptide; the sequence is MRVSAGLMIGGSCVATAATVLNA. At 24 to 41 the chain is on the lumenal side; it reads FVINKQFYPSIVYLSKSN. A helical membrane pass occupies residues 42-62; sequence ASMAVLYFQGIVLVYLMFQLL. Residues 63 to 99 lie on the Cytoplasmic side of the membrane; it reads KSILFGDLRAAEAEHLSERTWHAVLETCLAFTVFRDD. A helical membrane pass occupies residues 100–120; the sequence is FSAMFVMQFIGLLFIKCFHWL. Topologically, residues 121–141 are lumenal; it reads ADDRVDMMERSPVITLRFHLR. A helical membrane pass occupies residues 142-162; it reads MMTVLAALGFADSYFVSSAYF. At 163–170 the chain is on the cytoplasmic side; the sequence is STITKGAS. Residues 171–191 form a helical membrane-spanning segment; the sequence is SQIVFGFEYAILLALVLHVTI. Topologically, residues 192–215 are lumenal; sequence KYLLHMHDLRNPQSWDNKAVYLLY. A helical transmembrane segment spans residues 216 to 236; the sequence is AELLINLIRCVLYGFFAVIML. The Cytoplasmic segment spans residues 237–622; the sequence is RVHTFPLFSV…RFPPPNPEHE (386 aa). Residues 292-333 form an RING-type; atypical zinc finger; sequence CIICREEMTVESSPKRLPCSHVFHAHCLRSWFQRQQTCPTCR. Positions 436–445 are enriched in pro residues; sequence MPPPPIPQPN. 2 disordered regions span residues 436-463 and 514-622; these read MPPPPIPQPNAAPGESSNAEPPGRPNFD and PVPT…PEHE. Positions 526 to 538 are enriched in low complexity; that stretch reads ATASSVPTSVPSE. Over residues 562-577 the composition is skewed to polar residues; the sequence is FNDTQSTSTPSTSAGP. A compositionally biased stretch (low complexity) spans 579–596; the sequence is PSLTPSTSSVPSTSSVRT.

This sequence belongs to the HRD1 family. In terms of assembly, homodimer.

The protein localises to the endoplasmic reticulum membrane. The catalysed reaction is S-ubiquitinyl-[E2 ubiquitin-conjugating enzyme]-L-cysteine + [acceptor protein]-L-lysine = [E2 ubiquitin-conjugating enzyme]-L-cysteine + N(6)-ubiquitinyl-[acceptor protein]-L-lysine.. It functions in the pathway protein modification; protein ubiquitination. Functionally, acts as an E3 ubiquitin-protein ligase which accepts ubiquitin specifically from endoplasmic reticulum-associated ubc-7 E2 ligase and transfers it to substrates, promoting their degradation. Component of the endoplasmic reticulum quality control (ERQC) system, which is also called the ER-associated degradation (ERAD) system, involved in ubiquitin-dependent degradation of misfolded endoplasmic reticulum proteins. Also promotes the degradation of normal but naturally short-lived proteins. Protects cells from ER stress-induced apoptosis. Thought to play a role together with hsp-3 in developmental growth and function of intestinal cells and to play a role together with hsp-4 in gonad formation. This Caenorhabditis briggsae protein is E3 ubiquitin-protein ligase hrd-1.